Reading from the N-terminus, the 311-residue chain is DNA-directed RNA polymerase subunit alpha (311 aa).

Positions 1-227 are alpha N-terminal domain (alpha-NTD); the sequence is MAQFQIECVE…NLFCSLRNLD (227 aa). The interval 242–311 is alpha C-terminal domain (alpha-CTD); the sequence is ISQVLIEELQ…GISLPKEKTD (70 aa).

The protein belongs to the RNA polymerase alpha chain family. In plastids the minimal PEP RNA polymerase catalytic core is composed of four subunits: alpha, beta, beta', and beta''. When a (nuclear-encoded) sigma factor is associated with the core the holoenzyme is formed, which can initiate transcription.

It localises to the plastid. It is found in the chloroplast. It catalyses the reaction RNA(n) + a ribonucleoside 5'-triphosphate = RNA(n+1) + diphosphate. DNA-dependent RNA polymerase catalyzes the transcription of DNA into RNA using the four ribonucleoside triphosphates as substrates. This is DNA-directed RNA polymerase subunit alpha from Porphyra purpurea (Red seaweed).